Here is a 261-residue protein sequence, read N- to C-terminus: Glandular kallikrein-7, submandibular/renal (261 aa).

A signal peptide spans 1–18 (MWFLILFLDLSLGQIDAA). Residues 19-24 (PPGQSR) constitute a propeptide, activation peptide. In terms of domain architecture, Peptidase S1 spans 25–258 (VIGGYKCEKN…FTSWIKEVMK (234 aa)). 5 disulfides stabilise this stretch: cysteine 31–cysteine 173, cysteine 50–cysteine 66, cysteine 152–cysteine 219, cysteine 184–cysteine 198, and cysteine 209–cysteine 234. Histidine 65 acts as the Charge relay system in catalysis. A glycan (N-linked (GlcNAc...) asparagine) is linked at asparagine 108. The Charge relay system role is filled by aspartate 120. Serine 213 serves as the catalytic Charge relay system.

Belongs to the peptidase S1 family. Kallikrein subfamily. As to expression, kidney and submandibular gland. Not expressed in liver, pancreas, spleen, parotid, testis, cortex, prostate, ovary and pituitary.

It catalyses the reaction Preferential cleavage of Arg-|-Xaa bonds in small molecule substrates. Highly selective action to release kallidin (lysyl-bradykinin) from kininogen involves hydrolysis of Met-|-Xaa or Leu-|-Xaa.. Its function is as follows. Glandular kallikreins cleave Met-Lys and Arg-Ser bonds in kininogen to release Lys-bradykinin. Predominant kallikrein protein in the kidney. The sequence is that of Glandular kallikrein-7, submandibular/renal (Klk7) from Rattus norvegicus (Rat).